The chain runs to 394 residues: S-adenosylmethionine synthase (394 aa).

A Mg(2+)-binding site is contributed by E10. Position 16 (H16) interacts with ATP. E44 lines the K(+) pocket. Residues E57 and Q100 each contribute to the L-methionine site. ATP is bound by residues 168–170, 236–239, D247, 253–254, A270, K274, and K278; these read DGK, SGRF, and RK. D247 lines the L-methionine pocket. K278 serves as a coordination point for L-methionine.

The protein belongs to the AdoMet synthase family. As to quaternary structure, homotetramer. Requires Mn(2+) as cofactor. Mg(2+) is required as a cofactor. It depends on Co(2+) as a cofactor. The cofactor is K(+).

The protein localises to the cytoplasm. It carries out the reaction L-methionine + ATP + H2O = S-adenosyl-L-methionine + phosphate + diphosphate. Its pathway is amino-acid biosynthesis; S-adenosyl-L-methionine biosynthesis; S-adenosyl-L-methionine from L-methionine: step 1/1. Catalyzes the formation of S-adenosylmethionine from methionine and ATP. The reaction comprises two steps that are both catalyzed by the same enzyme: formation of S-adenosylmethionine (AdoMet) and triphosphate, and subsequent hydrolysis of the triphosphate. The protein is S-adenosylmethionine synthase (METK) of Medicago truncatula (Barrel medic).